A 91-amino-acid chain; its full sequence is Small ribosomal subunit protein bS16 (91 aa).

This sequence belongs to the bacterial ribosomal protein bS16 family.

The protein is Small ribosomal subunit protein bS16 of Staphylococcus epidermidis (strain ATCC 35984 / DSM 28319 / BCRC 17069 / CCUG 31568 / BM 3577 / RP62A).